The following is a 462-amino-acid chain: General transcription factor IIH subunit 4 (462 aa).

This sequence belongs to the TFB2 family. As to quaternary structure, component of the 7-subunit TFIIH core complex composed of XPB/ERCC3, XPD/ERCC2, GTF2H1, GTF2H2, GTF2H3, GTF2H4 and GTF2H5, which is active in NER. The core complex associates with the 3-subunit CDK-activating kinase (CAK) module composed of CCNH/cyclin H, CDK7 and MNAT1 to form the 10-subunit holoenzyme (holo-TFIIH) active in transcription. Part of TBP-based Pol II pre-initiation complex (PIC), in which Pol II core assembles with general transcription factors and other specific initiation factors including GTF2E1, GTF2E2, GTF2F1, GTF2F2, TCEA1, ERCC2, ERCC3, GTF2H2, GTF2H3, GTF2H4, GTF2H5, GTF2A1, GTF2A2, GTF2B and TBP; this large multi-subunit PIC complex mediates DNA unwinding and targets Pol II core to the transcription start site where the first phosphodiester bond forms.

The protein localises to the nucleus. Component of the general transcription and DNA repair factor IIH (TFIIH) core complex, which is involved in general and transcription-coupled nucleotide excision repair (NER) of damaged DNA and, when complexed to CAK, in RNA transcription by RNA polymerase II. In NER, TFIIH acts by opening DNA around the lesion to allow the excision of the damaged oligonucleotide and its replacement by a new DNA fragment. In transcription, TFIIH has an essential role in transcription initiation. When the pre-initiation complex (PIC) has been established, TFIIH is required for promoter opening and promoter escape. Phosphorylation of the C-terminal tail (CTD) of the largest subunit of RNA polymerase II by the kinase module CAK controls the initiation of transcription. In terms of biological role, stimulates the ATPase activity of TFIIH subunit XPB/ERCC3. This chain is General transcription factor IIH subunit 4 (GTF2H4), found in Homo sapiens (Human).